Here is a 115-residue protein sequence, read N- to C-terminus: MVKQVIVCRKLDIGKGKLCAQVAHASLDAALKVYRNNKELFDRWYREGAKKVVLKVNSLEELLDIAKKAMEKGIVVSIIRDAGKTQVSPGTIICIALGPDEDEKIDQITGNLKLY.

Belongs to the PTH2 family.

The protein resides in the cytoplasm. The catalysed reaction is an N-acyl-L-alpha-aminoacyl-tRNA + H2O = an N-acyl-L-amino acid + a tRNA + H(+). Functionally, the natural substrate for this enzyme may be peptidyl-tRNAs which drop off the ribosome during protein synthesis. The polypeptide is Peptidyl-tRNA hydrolase (pth) (Nanoarchaeum equitans (strain Kin4-M)).